Consider the following 518-residue polypeptide: Putative cytochrome P450 CYP13A7 (518 aa).

Cysteine 464 is a heme binding site.

It belongs to the cytochrome P450 family. It depends on heme as a cofactor.

Functionally, cytochromes P450 are a group of heme-thiolate monooxygenases. They oxidize a variety of structurally unrelated compounds, including steroids, fatty acids, and xenobiotics. In Caenorhabditis elegans, this protein is Putative cytochrome P450 CYP13A7 (cyp-13A7).